A 123-amino-acid chain; its full sequence is Thioredoxin domain-containing protein 17 (123 aa).

Alanine 2 is modified (N-acetylalanine). Positions 41–123 constitute a Thioredoxin domain; that stretch reads SWCPDCVQAE…NLVEMLFSED (83 aa). Residues cysteine 43 and cysteine 46 each act as nucleophile in the active site. Cysteines 43 and 46 form a disulfide.

This sequence belongs to the thioredoxin family. Interacts with TRXR1 and DYNLL1/DNCL1. In terms of processing, the oxidized protein is reduced by TRXR1. As to expression, ubiquitously expressed in cell lines.

The protein resides in the cytoplasm. In terms of biological role, disulfide reductase. May participate in various redox reactions through the reversible oxidation of its active center dithiol to a disulfide and catalyze dithiol-disulfide exchange reactions. Modulates TNF-alpha signaling and NF-kappa-B activation. Has peroxidase activity and may contribute to the elimination of cellular hydrogen peroxide. In Homo sapiens (Human), this protein is Thioredoxin domain-containing protein 17 (TXNDC17).